We begin with the raw amino-acid sequence, 328 residues long: Malate dehydrogenase (328 aa).

11-17 (GAAGQIG) is an NAD(+) binding site. Substrate-binding residues include Arg-94 and Arg-100. Residues Asn-107, Gln-114, and 131–133 (VGN) each bind NAD(+). Positions 133 and 164 each coordinate substrate. The Proton acceptor role is filled by His-189.

This sequence belongs to the LDH/MDH superfamily. MDH type 2 family.

The enzyme catalyses (S)-malate + NAD(+) = oxaloacetate + NADH + H(+). In terms of biological role, catalyzes the reversible oxidation of malate to oxaloacetate. This Xylella fastidiosa (strain 9a5c) protein is Malate dehydrogenase.